A 445-amino-acid polypeptide reads, in one-letter code: Eukaryotic translation initiation factor 3 subunit E (445 aa).

One can recognise a PCI domain in the interval 230-403; that stretch reads FFNHVKGRDL…GHVVMGAQPL (174 aa).

It belongs to the eIF-3 subunit E family. Component of the eukaryotic translation initiation factor 3 (eIF-3) complex.

It localises to the cytoplasm. Component of the eukaryotic translation initiation factor 3 (eIF-3) complex, which is involved in protein synthesis of a specialized repertoire of mRNAs and, together with other initiation factors, stimulates binding of mRNA and methionyl-tRNAi to the 40S ribosome. The eIF-3 complex specifically targets and initiates translation of a subset of mRNAs involved in cell proliferation. This chain is Eukaryotic translation initiation factor 3 subunit E (eIF3-S6), found in Bombyx mori (Silk moth).